The following is a 359-amino-acid chain: Molybdenum import ATP-binding protein ModC (359 aa).

Positions Met-1–Val-233 constitute an ABC transporter domain. Residue Gly-32–Thr-39 participates in ATP binding. Residues Ala-289–Ala-355 form the Mop domain.

The protein belongs to the ABC transporter superfamily. Molybdate importer (TC 3.A.1.8) family. As to quaternary structure, the complex is composed of two ATP-binding proteins (ModC), two transmembrane proteins (ModB) and a solute-binding protein (ModA).

It is found in the cell inner membrane. It carries out the reaction molybdate(out) + ATP + H2O = molybdate(in) + ADP + phosphate + H(+). Part of the ABC transporter complex ModABC involved in molybdenum import. Responsible for energy coupling to the transport system. The chain is Molybdenum import ATP-binding protein ModC from Brucella abortus (strain 2308).